A 1123-amino-acid polypeptide reads, in one-letter code: uncharacterized protein (1123 aa).

This is an uncharacterized protein from Ictaluridae (bullhead catfishes).